Here is a 901-residue protein sequence, read N- to C-terminus: Alpha-actinin-3 (901 aa).

Met-1 carries the N-acetylmethionine modification. The segment at Met-1–His-261 is actin-binding. Calponin-homology (CH) domains follow at residues Lys-45 to Ala-149 and Thr-158 to Ala-264. Spectrin repeat units follow at residues Lys-288–Ser-398, His-408–Arg-513, Gln-523–Glu-634, and Arg-644–Asn-747. EF-hand domains lie at Glu-760–Asp-795 and Leu-796–Glu-831. Ca(2+)-binding residues include Asp-773, Asn-777, Met-779, Asp-784, Asp-809, and Asn-811.

This sequence belongs to the alpha-actinin family. Homodimer; antiparallel. Also forms heterodimers with ACTN2. Interacts with MYOZ1.

Its function is as follows. F-actin cross-linking protein which is thought to anchor actin to a variety of intracellular structures. This is a bundling protein. This is Alpha-actinin-3 (ACTN3) from Bos taurus (Bovine).